The following is a 266-amino-acid chain: NADP-dependent mannitol dehydrogenase (266 aa).

3 residues coordinate NADP(+): S53, N107, and K140. Catalysis depends on S159, which acts as the Proton donor. Residues Y174, K178, I206, and T208 each contribute to the NADP(+) site. Residue Y174 is the Proton acceptor of the active site. K178 functions as the Lowers pKa of active site Tyr in the catalytic mechanism.

This sequence belongs to the short-chain dehydrogenases/reductases (SDR) family. As to quaternary structure, homotetramer.

It catalyses the reaction D-mannitol + NADP(+) = D-fructose + NADPH + H(+). Its function is as follows. D-mannitol 2-dehydrogenase which is not necessary for D-mannitol catabolism. D-mannitol metabolism occurs via at least two different routes involving mannitol dehydrogenase (MDH) or mannitol 1-phosphate dehydrogenase, and the exact physiological role of mannitol dehydrogenases remains unclear. The sequence is that of NADP-dependent mannitol dehydrogenase from Hypocrea jecorina (strain ATCC 56765 / BCRC 32924 / NRRL 11460 / Rut C-30) (Trichoderma reesei).